The chain runs to 213 residues: 3-isopropylmalate dehydratase small subunit (213 aa).

Belongs to the LeuD family. LeuD type 1 subfamily. In terms of assembly, heterodimer of LeuC and LeuD.

The catalysed reaction is (2R,3S)-3-isopropylmalate = (2S)-2-isopropylmalate. Its pathway is amino-acid biosynthesis; L-leucine biosynthesis; L-leucine from 3-methyl-2-oxobutanoate: step 2/4. Catalyzes the isomerization between 2-isopropylmalate and 3-isopropylmalate, via the formation of 2-isopropylmaleate. This is 3-isopropylmalate dehydratase small subunit from Neisseria meningitidis serogroup B (strain ATCC BAA-335 / MC58).